Consider the following 118-residue polypeptide: Small ribosomal subunit protein uS13 (118 aa).

The interval 94-118 (SLPLRGQRTKTNARTRKGPRKPIRK) is disordered.

Belongs to the universal ribosomal protein uS13 family. In terms of assembly, part of the 30S ribosomal subunit. Forms a loose heterodimer with protein S19. Forms two bridges to the 50S subunit in the 70S ribosome.

In terms of biological role, located at the top of the head of the 30S subunit, it contacts several helices of the 16S rRNA. In the 70S ribosome it contacts the 23S rRNA (bridge B1a) and protein L5 of the 50S subunit (bridge B1b), connecting the 2 subunits; these bridges are implicated in subunit movement. Contacts the tRNAs in the A and P-sites. The polypeptide is Small ribosomal subunit protein uS13 (Shewanella woodyi (strain ATCC 51908 / MS32)).